Consider the following 291-residue polypeptide: Glycine--tRNA ligase alpha subunit (291 aa).

Belongs to the class-II aminoacyl-tRNA synthetase family. Tetramer of two alpha and two beta subunits.

The protein localises to the cytoplasm. The enzyme catalyses tRNA(Gly) + glycine + ATP = glycyl-tRNA(Gly) + AMP + diphosphate. This is Glycine--tRNA ligase alpha subunit from Coprothermobacter proteolyticus (strain ATCC 35245 / DSM 5265 / OCM 4 / BT).